The following is a 544-amino-acid chain: Chaperonin GroEL (544 aa).

ATP is bound by residues Thr29–Pro32, Lys50, Asp86–Thr90, Gly414, and Asp495.

This sequence belongs to the chaperonin (HSP60) family. As to quaternary structure, forms a cylinder of 14 subunits composed of two heptameric rings stacked back-to-back. Interacts with the co-chaperonin GroES.

It localises to the cytoplasm. It catalyses the reaction ATP + H2O + a folded polypeptide = ADP + phosphate + an unfolded polypeptide.. In terms of biological role, together with its co-chaperonin GroES, plays an essential role in assisting protein folding. The GroEL-GroES system forms a nano-cage that allows encapsulation of the non-native substrate proteins and provides a physical environment optimized to promote and accelerate protein folding. This chain is Chaperonin GroEL, found in Treponema pallidum subsp. pallidum (strain SS14).